We begin with the raw amino-acid sequence, 337 residues long: MRVLGIETSCDETGIAVYDDETGLLANQLYSQVKLHADYGGVVPELASRDHVRKTVPLIQAALKEANLSAKDIDGVAYTAGPGLVGALLVGATVGRALAFAWGVPAVPVHHMEGHLLAPMLEENAPEFPFVALLVSGGHTQLISVTGIGEYLLLGESVDDAAGEAFDKTAKLLGLDYPGGPMLSRMAQLGTAGRFTFPRPMTDRPGLDFSFSGLKTFAANTIRANGTDDQTRADIARAFEDAVVDTLAIKSKRALEQTGFKRLVIAGGVSANRTLRSKLAEMMQKRGGEVFYARPEFCTDNGAMIAYAGLIRLKSGVNSELSVSVRPRWPLAELPKV.

Residues His111 and His115 each contribute to the Fe cation site. Substrate contacts are provided by residues 134-138 (LVSGG), Asp167, Gly180, and Asn272. Asp300 is a Fe cation binding site.

The protein belongs to the KAE1 / TsaD family. The cofactor is Fe(2+).

It localises to the cytoplasm. The catalysed reaction is L-threonylcarbamoyladenylate + adenosine(37) in tRNA = N(6)-L-threonylcarbamoyladenosine(37) in tRNA + AMP + H(+). Its function is as follows. Required for the formation of a threonylcarbamoyl group on adenosine at position 37 (t(6)A37) in tRNAs that read codons beginning with adenine. Is involved in the transfer of the threonylcarbamoyl moiety of threonylcarbamoyl-AMP (TC-AMP) to the N6 group of A37, together with TsaE and TsaB. TsaD likely plays a direct catalytic role in this reaction. This is tRNA N6-adenosine threonylcarbamoyltransferase from Yersinia enterocolitica serotype O:8 / biotype 1B (strain NCTC 13174 / 8081).